The following is a 500-amino-acid chain: Glycerol kinase (500 aa).

ADP is bound at residue threonine 13. Residues threonine 13, threonine 14, and serine 15 each contribute to the ATP site. Threonine 13 contributes to the sn-glycerol 3-phosphate binding site. An ADP-binding site is contributed by arginine 17. 4 residues coordinate sn-glycerol 3-phosphate: arginine 83, glutamate 84, tyrosine 135, and aspartate 244. The glycerol site is built by arginine 83, glutamate 84, tyrosine 135, aspartate 244, and glutamine 245. Residues threonine 266 and glycine 309 each coordinate ADP. 4 residues coordinate ATP: threonine 266, glycine 309, glutamine 313, and glycine 410. Positions 410 and 414 each coordinate ADP.

It belongs to the FGGY kinase family.

The catalysed reaction is glycerol + ATP = sn-glycerol 3-phosphate + ADP + H(+). It participates in polyol metabolism; glycerol degradation via glycerol kinase pathway; sn-glycerol 3-phosphate from glycerol: step 1/1. With respect to regulation, inhibited by fructose 1,6-bisphosphate (FBP). In terms of biological role, key enzyme in the regulation of glycerol uptake and metabolism. Catalyzes the phosphorylation of glycerol to yield sn-glycerol 3-phosphate. This chain is Glycerol kinase, found in Burkholderia pseudomallei (strain K96243).